The primary structure comprises 398 residues: FK506-binding protein 4 (398 aa).

Disordered stretches follow at residues 66 to 120, 164 to 232, and 245 to 288; these read EVDE…DEYE, VKHP…QLAK, and DLIA…KKNK. A compositionally biased stretch (acidic residues) spans 170 to 228; that stretch reads EPLEDLYSDEDSEEYSDDELDQEIEEDDELDHDEASSEESDEDQEFYDAISEGDEDIDE. Residues 264 to 287 are compositionally biased toward basic and acidic residues; that stretch reads PETKKSKKTKDEKNTKATENEKKN. In terms of domain architecture, PPIase FKBP-type spans 312-398; sequence GSKVGMRYIG…TFDVKLVSLK (87 aa).

The protein belongs to the FKBP-type PPIase family. FKBP3/4 subfamily. As to quaternary structure, binds to histones H3 and H4.

Its subcellular location is the nucleus. It carries out the reaction [protein]-peptidylproline (omega=180) = [protein]-peptidylproline (omega=0). Its activity is regulated as follows. Inhibited by both FK506 and rapamycin. PPIase that acts as a histone chaperone. Histone proline isomerase that increases the rate of cis-trans isomerization at prolines on the histone H3 N-terminal tail. Proline isomerization influences H3 methylation thereby regulating gene expression. In Candida glabrata (strain ATCC 2001 / BCRC 20586 / JCM 3761 / NBRC 0622 / NRRL Y-65 / CBS 138) (Yeast), this protein is FK506-binding protein 4 (FPR4).